The following is a 434-amino-acid chain: Trehalose-phosphatase (434 aa).

Residues aspartate 156 and aspartate 158 each coordinate Mg(2+). Aspartate 158 acts as the Proton donor/acceptor in catalysis. 275-277 (QKK) contributes to the substrate binding site. A Mg(2+)-binding site is contributed by aspartate 366.

This sequence belongs to the gob-1 trehalose phosphatase family. Mg(2+) serves as cofactor.

The enzyme catalyses alpha,alpha-trehalose 6-phosphate + H2O = alpha,alpha-trehalose + phosphate. Catalyzes the hydrolysis of trehalose 6-phosphate to trehalose and phosphate; prevents the accumulation of toxic levels of trehalose 6-phosphate. The sequence is that of Trehalose-phosphatase (gob-1) from Caenorhabditis briggsae.